Consider the following 460-residue polypeptide: Tyrosine phenol-lyase (460 aa).

Position 260 is an N6-(pyridoxal phosphate)lysine (K260).

Belongs to the beta-eliminating lyase family. As to quaternary structure, homotetramer. The cofactor is pyridoxal 5'-phosphate.

It catalyses the reaction L-tyrosine + H2O = phenol + pyruvate + NH4(+). This is Tyrosine phenol-lyase from Fusobacterium nucleatum subsp. nucleatum (strain ATCC 25586 / DSM 15643 / BCRC 10681 / CIP 101130 / JCM 8532 / KCTC 2640 / LMG 13131 / VPI 4355).